A 188-amino-acid chain; its full sequence is Mitochondrial import receptor subunit TOM20 homolog (188 aa).

Over M1–N12 the chain is Mitochondrial intermembrane. The helical transmembrane segment at V13–F31 threads the bilayer. The Cytoplasmic segment spans residues D32–E188. Disordered regions lie at residues K42 to D73 and D156 to E188. Residues M58–G67 show a composition bias toward low complexity.

The protein belongs to the Tom20 family. Forms part of the preprotein translocase complex of the outer mitochondrial membrane (TOM complex).

It is found in the mitochondrion outer membrane. In terms of biological role, central component of the receptor complex responsible for the recognition and translocation of cytosolically synthesized mitochondrial preproteins. Together with tomm-22 functions as the transit peptide receptor at the surface of the mitochondrion outer membrane and facilitates the movement of preproteins into the translocation pore. The chain is Mitochondrial import receptor subunit TOM20 homolog from Caenorhabditis elegans.